The sequence spans 207 residues: Guanylate kinase (207 aa).

Residues 4–184 (GILFIISAPS…AVNDLITIIT (181 aa)) enclose the Guanylate kinase-like domain. 11 to 18 (APSGTGKS) contributes to the ATP binding site.

The protein belongs to the guanylate kinase family.

Its subcellular location is the cytoplasm. The catalysed reaction is GMP + ATP = GDP + ADP. Essential for recycling GMP and indirectly, cGMP. This chain is Guanylate kinase (gmk), found in Buchnera aphidicola subsp. Acyrthosiphon pisum (strain APS) (Acyrthosiphon pisum symbiotic bacterium).